Here is a 101-residue protein sequence, read N- to C-terminus: MLSLAHFLVLGAILFAISIVGIFLNRKNVIVLLMAIELMLLAVNMNFVAFSHYMGDLAGQVFVFFILTVAAAESAIGLAILVVLFRNLDTINVDDMDTLKY.

Helical transmembrane passes span 4-24, 30-50, and 61-81; these read LAHFLVLGAILFAISIVGIFL, IVLLMAIELMLLAVNMNFVAF, and VFVFFILTVAAAESAIGLAIL.

This sequence belongs to the complex I subunit 4L family. In terms of assembly, NDH-1 is composed of 14 different subunits. Subunits NuoA, H, J, K, L, M, N constitute the membrane sector of the complex.

It localises to the cell inner membrane. The catalysed reaction is a quinone + NADH + 5 H(+)(in) = a quinol + NAD(+) + 4 H(+)(out). Functionally, NDH-1 shuttles electrons from NADH, via FMN and iron-sulfur (Fe-S) centers, to quinones in the respiratory chain. The immediate electron acceptor for the enzyme in this species is believed to be ubiquinone. Couples the redox reaction to proton translocation (for every two electrons transferred, four hydrogen ions are translocated across the cytoplasmic membrane), and thus conserves the redox energy in a proton gradient. This is NADH-quinone oxidoreductase subunit K from Cupriavidus pinatubonensis (strain JMP 134 / LMG 1197) (Cupriavidus necator (strain JMP 134)).